The chain runs to 431 residues: Histidinol dehydrogenase (431 aa).

3 residues coordinate NAD(+): Tyr-127, Gln-185, and Asn-208. Substrate-binding residues include Ser-234, Gln-256, and His-259. Zn(2+) is bound by residues Gln-256 and His-259. Residues Glu-323 and His-324 each act as proton acceptor in the active site. Residues His-324, Asp-357, Glu-411, and His-416 each contribute to the substrate site. Zn(2+) is bound at residue Asp-357. His-416 is a Zn(2+) binding site.

The protein belongs to the histidinol dehydrogenase family. It depends on Zn(2+) as a cofactor.

The catalysed reaction is L-histidinol + 2 NAD(+) + H2O = L-histidine + 2 NADH + 3 H(+). Its pathway is amino-acid biosynthesis; L-histidine biosynthesis; L-histidine from 5-phospho-alpha-D-ribose 1-diphosphate: step 9/9. In terms of biological role, catalyzes the sequential NAD-dependent oxidations of L-histidinol to L-histidinaldehyde and then to L-histidine. The sequence is that of Histidinol dehydrogenase from Vibrio vulnificus (strain CMCP6).